Consider the following 507-residue polypeptide: Sensor protein CseC (507 aa).

Residues 1–42 (MRGFFRQRRSVSPPGHPYDRTGPGEHAGPGARTGPGGRPRVL) are disordered. Residues 25–37 (EHAGPGARTGPGG) are compositionally biased toward gly residues. A run of 2 helical transmembrane segments spans residues 60-80 (LSAAIALVGALVAIALSLVVH) and 183-203 (ALVIGSIAVVLGGSALGVLIG). The 57-residue stretch at 204 to 260 (GQLSRRLREAAAAANRVASGEPDVRVRDAIGGVVRDETDDVARAVDAMADALQQRIE) folds into the HAMP domain. Positions 268–470 (DIAHELRTPV…VAVLWLPEHA (203 aa)) constitute a Histidine kinase domain. Residue H271 is modified to Phosphohistidine; by autocatalysis. A disordered region spans residues 472-507 (TNTGSYPMLPDRSKSGASSSARDMSREASQGMSRKP). Residues 486 to 507 (SGASSSARDMSREASQGMSRKP) show a composition bias toward polar residues.

The protein resides in the cell membrane. The catalysed reaction is ATP + protein L-histidine = ADP + protein N-phospho-L-histidine.. Member of the two-component regulatory system CseB/CseC involved in the stability of the cell envelope, through activation of transcription of RNA polymerase sigma-E factor. CseC functions as a membrane-associated protein kinase that phosphorylates CseB in response to changes in the cell envelope. This chain is Sensor protein CseC (cseC), found in Streptomyces coelicolor (strain ATCC BAA-471 / A3(2) / M145).